A 396-amino-acid polypeptide reads, in one-letter code: MFCDSFAFAQVMSCFGCFGGSERSRHSPNPYDDDTYSHDSGETSNPGGDDEEGEEEEEVEELSRSKRSEEILKCKLQNGLVCRQFPVKETNKLTRGEDEDGNKTINEFVRERKIGSGSYGKVVLYRSTVDDKHYAIKAFHKSHLSRLRVAPSETAMGDVLREVMIMKTLEHPNIVNLIEVIDDPEFDDFYMVLEYVDGKWAYDDSGPPGALGEITARKYLRDVVAGLMYLHAHNVIHGDIKPDNLLVTSTGRVKIGDFSVSQVFKDDDDQLRRSPGTPVFTAPECCLGITYSGRSADTWAVGVTLYCMILGQYPFLGDTLQDTYDKIVHNPLIIPEGLNPRLRDLIEGLLCKDPNQRMTLKAVAEHPWITGEDGAISEYCCWCKRKAEEEEDQNHS.

A disordered region spans residues 22–65 (ERSRHSPNPYDDDTYSHDSGETSNPGGDDEEGEEEEEVEELSRS). Over residues 48–60 (GDDEEGEEEEEVE) the composition is skewed to acidic residues. The Protein kinase domain maps to 108-369 (FVRERKIGSG…LKAVAEHPWI (262 aa)). Residues 114–122 (IGSGSYGKV) and K137 contribute to the ATP site. Position 154 is a phosphothreonine; by autocatalysis (T154). Residue D239 is the Proton acceptor of the active site. S261 carries the post-translational modification Phosphoserine; by KIN10.

Belongs to the protein kinase superfamily. Ser/Thr protein kinase family. As to quaternary structure, associates with the SNF1-related protein kinase (SnRK) complex. Interacts with AL1, a geminivirus (TGMV) protein essential for viral replication. As to expression, expressed in shoot apical meristem, leaf primordium and emerging petiole (at protein level).

It localises to the cytoplasm. It is found in the nucleus. It catalyses the reaction L-seryl-[protein] + ATP = O-phospho-L-seryl-[protein] + ADP + H(+). The catalysed reaction is L-threonyl-[protein] + ATP = O-phospho-L-threonyl-[protein] + ADP + H(+). Its activity is regulated as follows. Activated when autophosphorylated at Thr-154 and inactivated when phosphorylated at Ser-261 by SnRK1.1/KIN10. Functionally, activates SnRK1.1/KIN10 and SnRK1.2/KIN11 by phosphorylation of their activation-loop 'Thr-198' and 'Thr-176', respectively. Required for the regulation by SnRK1 kinases of the transcription of a large set of genes, the modification the activity of metabolic enzymes, and the control of various nutrient-responsive cellular developmental processes. This chain is Serine/threonine-protein kinase GRIK1 (GRIK1), found in Arabidopsis thaliana (Mouse-ear cress).